Consider the following 115-residue polypeptide: MADLVDKPRSELSEIELARLEEYEFSAGPLSVLQQAVKNHDQVLINCRNNKKLLARVKAFDRHSNMVLENVKEMWTEKKRTASGKKGKAINKDRFISKMFLRGDGVVLVVRIPSA.

A Sm domain is found at 30-115 (LSVLQQAVKN…VVLVVRIPSA (86 aa)).

Belongs to the snRNP core protein family. Belongs to the 40S cdc5-associated complex (or cwf complex), a spliceosome sub-complex reminiscent of a late-stage spliceosome composed of the U2, U5 and U6 snRNAs and at least brr2, cdc5, cwf2/prp3, cwf3/syf1, cwf4/syf3, cwf5/ecm2, spp42/cwf6, cwf7/spf27, cwf8, cwf9, cwf10, cwf11, cwf12, prp45/cwf13, cwf14, cwf15, cwf16, cwf17, cwf18, cwf19, cwf20, cwf21, cwf22, cwf23, cwf24, cwf25, cwf26, cyp7/cwf27, cwf28, cwf29/ist3, lea1, msl1, prp5/cwf1, prp10, prp12/sap130, prp17, prp22, sap61, sap62, sap114, sap145, slu7, smb1, smd1, smd3, smf1, smg1 and syf2.

The protein localises to the nucleus. The protein resides in the cytoplasm. Its subcellular location is the cytosol. Plays a role in pre-mRNA splicing as a core component of the spliceosomal U1, U2, U4 and U5 small nuclear ribonucleoproteins (snRNPs), the building blocks of the spliceosome. This chain is Small nuclear ribonucleoprotein Sm D2 (smd2), found in Schizosaccharomyces pombe (strain 972 / ATCC 24843) (Fission yeast).